Reading from the N-terminus, the 454-residue chain is GTPase Der (454 aa).

2 consecutive EngA-type G domains span residues 3–167 (PVIT…GIAE) and 181–354 (MKIA…AAAM). GTP-binding positions include 9 to 16 (GRPNVGKS), 56 to 60 (DTGGF), 119 to 122 (NKTE), 187 to 194 (GRPNVGKS), 234 to 238 (DTAGL), and 299 to 302 (NKWD). The KH-like domain occupies 355-439 (AKLPTPRLTR…PLRIQMNTAK (85 aa)).

The protein belongs to the TRAFAC class TrmE-Era-EngA-EngB-Septin-like GTPase superfamily. EngA (Der) GTPase family. Associates with the 50S ribosomal subunit.

Functionally, GTPase that plays an essential role in the late steps of ribosome biogenesis. The chain is GTPase Der from Polynucleobacter asymbioticus (strain DSM 18221 / CIP 109841 / QLW-P1DMWA-1) (Polynucleobacter necessarius subsp. asymbioticus).